A 336-amino-acid polypeptide reads, in one-letter code: Fructose-1,6-bisphosphatase class 1 (336 aa).

Positions 91, 114, 116, and 117 each coordinate Mg(2+). Substrate contacts are provided by residues 117–120, N210, Y243, and K273; that span reads DGSS. E279 is a Mg(2+) binding site.

The protein belongs to the FBPase class 1 family. As to quaternary structure, homotetramer. Requires Mg(2+) as cofactor.

The protein localises to the cytoplasm. The enzyme catalyses beta-D-fructose 1,6-bisphosphate + H2O = beta-D-fructose 6-phosphate + phosphate. The protein operates within carbohydrate biosynthesis; gluconeogenesis. In Dichelobacter nodosus (strain VCS1703A), this protein is Fructose-1,6-bisphosphatase class 1.